The chain runs to 358 residues: Peptide chain release factor 1 (358 aa).

Gln-234 is subject to N5-methylglutamine.

This sequence belongs to the prokaryotic/mitochondrial release factor family. Post-translationally, methylated by PrmC. Methylation increases the termination efficiency of RF1.

The protein localises to the cytoplasm. Peptide chain release factor 1 directs the termination of translation in response to the peptide chain termination codons UAG and UAA. This is Peptide chain release factor 1 from Akkermansia muciniphila (strain ATCC BAA-835 / DSM 22959 / JCM 33894 / BCRC 81048 / CCUG 64013 / CIP 107961 / Muc).